A 354-amino-acid polypeptide reads, in one-letter code: Holliday junction branch migration complex subunit RuvB (354 aa).

The tract at residues 4–198 (TTDYGASNTG…FGFTAHLDFY (195 aa)) is large ATPase domain (RuvB-L). ATP is bound by residues Leu-37, Arg-38, Gly-79, Lys-82, Thr-83, Thr-84, 145–147 (EDF), Arg-188, Tyr-198, and Arg-235. Position 83 (Thr-83) interacts with Mg(2+). Positions 199-269 (PHEELEKLIE…DVKEALALYQ (71 aa)) are small ATPAse domain (RuvB-S). The interval 272 to 354 (SEGLDRLDIA…TPKDDVSKLF (83 aa)) is head domain (RuvB-H). 2 residues coordinate DNA: Arg-327 and Arg-332.

Belongs to the RuvB family. In terms of assembly, homohexamer. Forms an RuvA(8)-RuvB(12)-Holliday junction (HJ) complex. HJ DNA is sandwiched between 2 RuvA tetramers; dsDNA enters through RuvA and exits via RuvB. An RuvB hexamer assembles on each DNA strand where it exits the tetramer. Each RuvB hexamer is contacted by two RuvA subunits (via domain III) on 2 adjacent RuvB subunits; this complex drives branch migration. In the full resolvosome a probable DNA-RuvA(4)-RuvB(12)-RuvC(2) complex forms which resolves the HJ.

Its subcellular location is the cytoplasm. It carries out the reaction ATP + H2O = ADP + phosphate + H(+). Its function is as follows. The RuvA-RuvB-RuvC complex processes Holliday junction (HJ) DNA during genetic recombination and DNA repair, while the RuvA-RuvB complex plays an important role in the rescue of blocked DNA replication forks via replication fork reversal (RFR). RuvA specifically binds to HJ cruciform DNA, conferring on it an open structure. The RuvB hexamer acts as an ATP-dependent pump, pulling dsDNA into and through the RuvAB complex. RuvB forms 2 homohexamers on either side of HJ DNA bound by 1 or 2 RuvA tetramers; 4 subunits per hexamer contact DNA at a time. Coordinated motions by a converter formed by DNA-disengaged RuvB subunits stimulates ATP hydrolysis and nucleotide exchange. Immobilization of the converter enables RuvB to convert the ATP-contained energy into a lever motion, pulling 2 nucleotides of DNA out of the RuvA tetramer per ATP hydrolyzed, thus driving DNA branch migration. The RuvB motors rotate together with the DNA substrate, which together with the progressing nucleotide cycle form the mechanistic basis for DNA recombination by continuous HJ branch migration. Branch migration allows RuvC to scan DNA until it finds its consensus sequence, where it cleaves and resolves cruciform DNA. In Bifidobacterium longum (strain NCC 2705), this protein is Holliday junction branch migration complex subunit RuvB.